Here is a 257-residue protein sequence, read N- to C-terminus: Kallikrein-1 (257 aa).

A signal peptide spans 1–18 (MWFLVLCLALSLGGTGRA). A propeptide spans 19 to 24 (PPIQSR) (activation peptide). The region spanning 25–254 (IVGGWECSQP…YVKWIEDTIA (230 aa)) is the Peptidase S1 domain. 5 cysteine pairs are disulfide-bonded: Cys31–Cys169, Cys47–Cys63, Cys148–Cys215, Cys180–Cys194, and Cys205–Cys230. The active-site Charge relay system is the His62. Ser90 carries an O-linked (GalNAc...) serine glycan. Asn99 carries an N-linked (GlcNAc...) asparagine glycan. An O-linked (GalNAc...) serine glycan is attached at Ser101. A glycan (N-linked (GlcNAc...) asparagine) is linked at Asn105. Asp116 (charge relay system) is an active-site residue. Asn160 carries an N-linked (GlcNAc...) asparagine glycan. An O-linked (GalNAc...) serine glycan is attached at Ser162. Catalysis depends on Ser209, which acts as the Charge relay system.

It belongs to the peptidase S1 family. Kallikrein subfamily.

The enzyme catalyses Preferential cleavage of Arg-|-Xaa bonds in small molecule substrates. Highly selective action to release kallidin (lysyl-bradykinin) from kininogen involves hydrolysis of Met-|-Xaa or Leu-|-Xaa.. Functionally, glandular kallikreins cleave Met-Lys and Arg-Ser bonds in kininogen to release Lys-bradykinin. The chain is Kallikrein-1 (KLK1) from Macaca fascicularis (Crab-eating macaque).